Here is a 148-residue protein sequence, read N- to C-terminus: Prefoldin subunit alpha (148 aa).

It belongs to the prefoldin subunit alpha family. In terms of assembly, heterohexamer of two alpha and four beta subunits.

The protein resides in the cytoplasm. Molecular chaperone capable of stabilizing a range of proteins. Seems to fulfill an ATP-independent, HSP70-like function in archaeal de novo protein folding. The polypeptide is Prefoldin subunit alpha (pfdA) (Pyrococcus horikoshii (strain ATCC 700860 / DSM 12428 / JCM 9974 / NBRC 100139 / OT-3)).